We begin with the raw amino-acid sequence, 64 residues long: Large ribosomal subunit protein bL35 (64 aa).

A compositionally biased stretch (polar residues) spans 1–10; that stretch reads MPKMKTNSAA. The tract at residues 1 to 64 is disordered; sequence MPKMKTNSAA…SKNMKKLLGR (64 aa).

This sequence belongs to the bacterial ribosomal protein bL35 family.

The polypeptide is Large ribosomal subunit protein bL35 (Bifidobacterium adolescentis (strain ATCC 15703 / DSM 20083 / NCTC 11814 / E194a)).